A 207-amino-acid polypeptide reads, in one-letter code: Holliday junction resolvase RecU (207 aa).

The tract at residues 1-21 (MTIRYPNGQVYRQPGPTKSKS) is disordered. 4 residues coordinate Mg(2+): T87, D89, E102, and Q121.

The protein belongs to the RecU family. Requires Mg(2+) as cofactor.

It localises to the cytoplasm. It catalyses the reaction Endonucleolytic cleavage at a junction such as a reciprocal single-stranded crossover between two homologous DNA duplexes (Holliday junction).. In terms of biological role, endonuclease that resolves Holliday junction intermediates in genetic recombination. Cleaves mobile four-strand junctions by introducing symmetrical nicks in paired strands. Promotes annealing of linear ssDNA with homologous dsDNA. Required for DNA repair, homologous recombination and chromosome segregation. The sequence is that of Holliday junction resolvase RecU from Lactiplantibacillus plantarum (strain ATCC BAA-793 / NCIMB 8826 / WCFS1) (Lactobacillus plantarum).